We begin with the raw amino-acid sequence, 76 residues long: RNA-binding protein KhpA (76 aa).

The KH domain occupies 29 to 76 (SLHIELSVHPDDMGKVIGKQGRTAKALRSVVYAAATKQKRRVRLDIID).

Belongs to the KhpA RNA-binding protein family. As to quaternary structure, forms a complex with KhpB.

It localises to the cytoplasm. In terms of biological role, a probable RNA chaperone. Forms a complex with KhpB which binds to cellular RNA and controls its expression. Plays a role in peptidoglycan (PG) homeostasis and cell length regulation. The polypeptide is RNA-binding protein KhpA (Halalkalibacterium halodurans (strain ATCC BAA-125 / DSM 18197 / FERM 7344 / JCM 9153 / C-125) (Bacillus halodurans)).